Consider the following 76-residue polypeptide: Conotoxin Im6.9 (76 aa).

The signal sequence occupies residues 1–19 (MEKLTILLLVTAVLMSTQA). A propeptide spanning residues 20-45 (LMQSGIEKRQRAKIKFFSKRKTTAER) is cleaved from the precursor. 3 disulfide bridges follow: cysteine 51–cysteine 65, cysteine 58–cysteine 69, and cysteine 64–cysteine 73.

Belongs to the conotoxin O2 superfamily. In terms of tissue distribution, expressed by the venom duct.

The protein localises to the secreted. Probable neurotoxin. The sequence is that of Conotoxin Im6.9 from Conus imperialis (Imperial cone).